Here is a 619-residue protein sequence, read N- to C-terminus: DNA mismatch repair protein MutL (619 aa).

Positions 339-400 (AEKDDPPAPR…GGASWPHAQP (62 aa)) are disordered.

Belongs to the DNA mismatch repair MutL/HexB family.

In terms of biological role, this protein is involved in the repair of mismatches in DNA. It is required for dam-dependent methyl-directed DNA mismatch repair. May act as a 'molecular matchmaker', a protein that promotes the formation of a stable complex between two or more DNA-binding proteins in an ATP-dependent manner without itself being part of a final effector complex. This Klebsiella pneumoniae subsp. pneumoniae (strain ATCC 700721 / MGH 78578) protein is DNA mismatch repair protein MutL.